The following is a 547-amino-acid chain: Fimbria adhesin EcpD (547 aa).

The N-terminal stretch at 1–23 (MRVNLLITMIIFALIWPVTALRA) is a signal peptide.

It belongs to the EcpD/MatE family. As to quaternary structure, forms polymers. Interacts with EcpA.

The protein localises to the fimbrium. Part of the ecpRABCDE operon, which encodes the E.coli common pilus (ECP). ECP is found in both commensal and pathogenic strains and plays a dual role in early-stage biofilm development and host cell recognition. Tip pilus adhesin, which is required for assembly of EcpA into fibers. The chain is Fimbria adhesin EcpD (ecpD) from Escherichia coli (strain K12).